A 51-amino-acid chain; its full sequence is Defensin (51 aa).

Disulfide bonds link Cys-3/Cys-31, Cys-17/Cys-36, and Cys-21/Cys-38. Phe-51 carries the post-translational modification Phenylalanine amide.

It localises to the secreted. Functionally, antibacterial peptide against Gram-positive and Gram-negative bacteria and fungi. The chain is Defensin from Bombus pascuorum (Common carder bumblebee).